Here is a 120-residue protein sequence, read N- to C-terminus: Small ribosomal subunit protein eS25 (120 aa).

The interval 1-32 (MPPKAGQTKKAKMEAANKGAKKTTKKWSKGQS) is disordered. The segment covering 19–28 (GAKKTTKKWS) has biased composition (basic residues).

This sequence belongs to the eukaryotic ribosomal protein eS25 family.

This Leishmania infantum protein is Small ribosomal subunit protein eS25 (RPS25).